Here is a 120-residue protein sequence, read N- to C-terminus: Ribonuclease P protein component (120 aa).

Belongs to the RnpA family. As to quaternary structure, consists of a catalytic RNA component (M1 or rnpB) and a protein subunit.

The enzyme catalyses Endonucleolytic cleavage of RNA, removing 5'-extranucleotides from tRNA precursor.. Its function is as follows. RNaseP catalyzes the removal of the 5'-leader sequence from pre-tRNA to produce the mature 5'-terminus. It can also cleave other RNA substrates such as 4.5S RNA. The protein component plays an auxiliary but essential role in vivo by binding to the 5'-leader sequence and broadening the substrate specificity of the ribozyme. In Azoarcus sp. (strain BH72), this protein is Ribonuclease P protein component.